Reading from the N-terminus, the 632-residue chain is Probable potassium transport system protein Kup (632 aa).

12 helical membrane-spanning segments follow: residues 17-37 (LFYL…TSPL), 60-80 (LISL…VLFL), 106-126 (TAIL…DAMI), 146-166 (LSEY…VVQS), 175-195 (FFGP…ISHI), 210-230 (AVSF…AVFL), 254-274 (WFLL…ALVL), 292-312 (ALLP…QAVI), 344-364 (IFVP…VLSF), 370-390 (LATA…IMAF), 401-421 (LPVA…FLGA), and 426-446 (IHDG…IMWT).

This sequence belongs to the HAK/KUP transporter (TC 2.A.72) family.

Its subcellular location is the cell inner membrane. It carries out the reaction K(+)(in) + H(+)(in) = K(+)(out) + H(+)(out). Functionally, transport of potassium into the cell. Likely operates as a K(+):H(+) symporter. This Rhizobium rhizogenes (Agrobacterium rhizogenes) protein is Probable potassium transport system protein Kup.